The following is a 576-amino-acid chain: Phosphoenolpyruvate-protein phosphotransferase (576 aa).

Catalysis depends on His-189, which acts as the Tele-phosphohistidine intermediate. Phosphoenolpyruvate contacts are provided by Arg-296 and Arg-332. Glu-431 and Asp-455 together coordinate Mg(2+). Residues 454 to 455 (ND) and Arg-465 each bind phosphoenolpyruvate. The active-site Proton donor is the Cys-502.

Belongs to the PEP-utilizing enzyme family. Homodimer. The cofactor is Mg(2+).

The protein localises to the cytoplasm. The catalysed reaction is L-histidyl-[protein] + phosphoenolpyruvate = N(pros)-phospho-L-histidyl-[protein] + pyruvate. Its function is as follows. General (non sugar-specific) component of the phosphoenolpyruvate-dependent sugar phosphotransferase system (sugar PTS). This major carbohydrate active-transport system catalyzes the phosphorylation of incoming sugar substrates concomitantly with their translocation across the cell membrane. Enzyme I transfers the phosphoryl group from phosphoenolpyruvate (PEP) to the phosphoryl carrier protein (HPr). This is Phosphoenolpyruvate-protein phosphotransferase (ptsI) from Buchnera aphidicola subsp. Baizongia pistaciae (strain Bp).